The following is a 38-amino-acid chain: Photosystem II reaction center protein L (38 aa).

The helical transmembrane segment at 17-37 (SLYWGLLLIFVLAILFSNYFF) threads the bilayer.

The protein belongs to the PsbL family. As to quaternary structure, PSII is composed of 1 copy each of membrane proteins PsbA, PsbB, PsbC, PsbD, PsbE, PsbF, PsbH, PsbI, PsbJ, PsbK, PsbL, PsbM, PsbT, PsbX, PsbY, PsbZ, Psb30/Ycf12, at least 3 peripheral proteins of the oxygen-evolving complex and a large number of cofactors. It forms dimeric complexes.

Its subcellular location is the plastid. The protein resides in the chloroplast thylakoid membrane. One of the components of the core complex of photosystem II (PSII). PSII is a light-driven water:plastoquinone oxidoreductase that uses light energy to abstract electrons from H(2)O, generating O(2) and a proton gradient subsequently used for ATP formation. It consists of a core antenna complex that captures photons, and an electron transfer chain that converts photonic excitation into a charge separation. This subunit is found at the monomer-monomer interface and is required for correct PSII assembly and/or dimerization. In Aethionema cordifolium (Lebanon stonecress), this protein is Photosystem II reaction center protein L.